Reading from the N-terminus, the 318-residue chain is Mitochondrial coenzyme A transporter SLC25A42 (318 aa).

3 Solcar repeats span residues 31–117 (RQVL…YKRI), 129–214 (LPPW…LKSL), and 224–312 (PYPF…MQIL). Transmembrane regions (helical) follow at residues 33–53 (VLSS…AVAP), 89–109 (LWRG…IQFS), 135–155 (LFAG…LDLV), 186–206 (LYHG…LSFF), 230–250 (MIFG…LDVV), and 293–313 (VKGP…QILL).

The protein belongs to the mitochondrial carrier (TC 2.A.29) family.

The protein resides in the mitochondrion inner membrane. The catalysed reaction is ADP(out) + CoA(in) = ADP(in) + CoA(out). The enzyme catalyses 3'-dephospho-CoA(in) + ADP(out) = 3'-dephospho-CoA(out) + ADP(in). It catalyses the reaction adenosine 3',5'-bisphosphate(in) + ADP(out) = adenosine 3',5'-bisphosphate(out) + ADP(in). It carries out the reaction AMP(in) + ADP(out) = AMP(out) + ADP(in). The catalysed reaction is dADP(in) + ADP(out) = dADP(out) + ADP(in). The enzyme catalyses ADP(in) + ATP(out) = ADP(out) + ATP(in). Functionally, mitochondrial carrier mediating the transport of coenzyme A (CoA) in mitochondria in exchange for intramitochondrial (deoxy)adenine nucleotides and adenosine 3',5'-diphosphate. In Homo sapiens (Human), this protein is Mitochondrial coenzyme A transporter SLC25A42 (SLC25A42).